The chain runs to 234 residues: Thiamine import ATP-binding protein ThiQ (234 aa).

An ABC transporter domain is found at 2–230 (LTLQQVHYYY…HSHPELVEFF (229 aa)). Position 32 to 39 (32 to 39 (GPSGAGKS)) interacts with ATP.

It belongs to the ABC transporter superfamily. Thiamine importer (TC 3.A.1.19.1) family. The complex is composed of two ATP-binding proteins (ThiQ), two transmembrane proteins (ThiP) and a solute-binding protein (ThiB).

The protein localises to the cell inner membrane. It carries out the reaction thiamine(out) + ATP + H2O = thiamine(in) + ADP + phosphate + H(+). In terms of biological role, part of the ABC transporter complex ThiBPQ involved in thiamine import. Responsible for energy coupling to the transport system. This is Thiamine import ATP-binding protein ThiQ from Vibrio vulnificus (strain CMCP6).